Consider the following 302-residue polypeptide: Actin maturation protease (302 aa).

Residues 1–26 (MPHTNEDPTAQQAGVILDPPPPLPPP) form a disordered region. Residues 85–205 (SLIQEGPQCG…WAVISGVLFG (121 aa)) form a peptidase C39-like region. The active site involves C93.

The protein belongs to the ACTMAP family.

Its subcellular location is the cytoplasm. It carries out the reaction N-terminal N(alpha)-acetyl-L-methionyl-L-aspartyl-[protein] + H2O = N-terminal L-aspartyl-[protein] + N-acetyl-L-methionine. The catalysed reaction is N-terminal N(alpha)-acetyl-L-methionyl-L-glutamyl-[protein] + H2O = N-terminal L-glutamyl-[protein] + N-acetyl-L-methionine. The enzyme catalyses N-terminal N(alpha)-acetyl-L-cysteinyl-L-aspartyl-[protein] + H2O = N-terminal L-aspartyl-[protein] + N-acetyl-L-cysteine. It catalyses the reaction N-terminal N(alpha)-acetyl-L-cysteinyl-L-glutamyl-[protein] + H2O = N-terminal L-glutamyl-[protein] + N-acetyl-L-cysteine. In terms of biological role, actin maturation protease that specifically mediates the cleavage of immature acetylated N-terminal actin, thereby contributing to actin maturation. Cleaves N-terminal acetylated methionine of immature cytoplasmic beta- and gamma-actin after translation. Cleaves N-terminal acetylated cysteine of muscle alpha-actin after canonical removal of N-terminal methionine. This chain is Actin maturation protease, found in Xenopus tropicalis (Western clawed frog).